The following is a 118-amino-acid chain: Cobalt transport protein CbiN (118 aa).

Helical transmembrane passes span Ile-7–Leu-27 and Ser-70–Leu-90. The interval Glu-99–Asp-118 is disordered. Over residues Ser-102–Asp-118 the composition is skewed to low complexity.

It belongs to the CbiN family. In terms of assembly, forms an energy-coupling factor (ECF) transporter complex composed of an ATP-binding protein (A component, CbiO), a transmembrane protein (T component, CbiQ) and 2 possible substrate-capture proteins (S components, CbiM and CbiN) of unknown stoichimetry.

Its subcellular location is the cell membrane. It participates in cofactor biosynthesis; adenosylcobalamin biosynthesis. Functionally, part of the energy-coupling factor (ECF) transporter complex CbiMNOQ involved in cobalt import. The sequence is that of Cobalt transport protein CbiN from Streptomyces coelicolor (strain ATCC BAA-471 / A3(2) / M145).